The chain runs to 392 residues: GDP-mannose transporter (392 aa).

Positions 1 to 40 (MANKRNEDIELGPAEGRGSTDKDPFLARRSSSQPNRPQQA) are disordered. Topologically, residues 1-55 (MANKRNEDIELGPAEGRGSTDKDPFLARRSSSQPNRPQQAGPFGGYFDKIDHSPG) are cytoplasmic. The segment covering 29 to 38 (RSSSQPNRPQ) has biased composition (polar residues). The helical transmembrane segment at 56–76 (ASIIAYCLSSISMTVVNKYVV) threads the bilayer. The Lumenal segment spans residues 77 to 80 (SGSE). The helical transmembrane segment at 81–101 (WNLNFFYLAVQSLVCTAAILI) threads the bilayer. The Cytoplasmic portion of the chain corresponds to 102–121 (CKQLGMFQNLAAFDSTKAKK). Residues 122–144 (WFPISLLLVGMIYTSTKALQFLS) traverse the membrane as a helical segment. At 145–149 (VPVYT) the chain is on the lumenal side. A helical transmembrane segment spans residues 150-168 (IFKNLTIIVVAYGEVLWFG). Residues 169-174 (GSVTPM) are Cytoplasmic-facing. The helical transmembrane segment at 175-198 (ALLSFGLMVLSSVIAAWADIQAAV) threads the bilayer. Residues 199 to 213 (EGVGHTAEATDAIST) are Lumenal-facing. The chain crosses the membrane as a helical span at residues 214-234 (LNAGYAWMGMNVFCTAAYLLG). Residues 235–248 (MRKVIKKMNFKDYD) are Cytoplasmic-facing. The helical transmembrane segment at 249-269 (TMFYNNLLTIPVLIVFSLLFE) threads the bilayer. The Lumenal portion of the chain corresponds to 270–287 (DWSNDNLIKNFPVETRNS). The chain crosses the membrane as a helical span at residues 288–308 (LFIGMIYSGLAAIFISYCSAW). At 309 to 316 (CIRVTSST) the chain is on the cytoplasmic side. The chain crosses the membrane as a helical span at residues 317–337 (TYSMVGALNKLPLAISGLIFF). At 338 to 342 (DAPVT) the chain is on the lumenal side. The helical transmembrane segment at 343–361 (FGSVTAIFVGFVSGLVYTW) threads the bilayer. Over 362 to 392 (SKTRQKVSQILPTTQPTMSASAASNRDAANA) the chain is Cytoplasmic.

This sequence belongs to the TPT transporter family. SLC35D subfamily. Homooligomer.

It localises to the golgi apparatus membrane. Its subcellular location is the cytoplasmic vesicle membrane. The protein localises to the endoplasmic reticulum membrane. Involved in the import of GDP-mannose from the cytoplasm into the Golgi lumen. The protein is GDP-mannose transporter (vrg-4) of Neurospora crassa (strain ATCC 24698 / 74-OR23-1A / CBS 708.71 / DSM 1257 / FGSC 987).